A 570-amino-acid polypeptide reads, in one-letter code: NADPH oxidase 2 (570 aa).

The Cytoplasmic segment spans residues 2–9 (GNWAVNEG). The chain crosses the membrane as a helical span at residues 10–36 (LSIFVILVWLGLNVFLFINYYKVYDDG). The Extracellular segment spans residues 37–46 (PKYNYTRKLL). Asn-40 carries an N-linked (GlcNAc...) asparagine glycan. A helical transmembrane segment spans residues 47 to 72 (GSALALARAPAACLNFNCMLILLPVC). The region spanning 54 to 286 (RAPAACLNFN…MFLYLCERLV (233 aa)) is the Ferric oxidoreductase domain. Residues 73-95 (RNLLSFLRGSSACCSTRIRRQLD) lie on the Cytoplasmic side of the membrane. The helical transmembrane segment at 96-130 (RNLTFHKMVAWMIALHTAIHTIAHLFNVEWCVNAR) threads the bilayer. Positions 101 and 115 each coordinate heme b. The Extracellular portion of the chain corresponds to 131–163 (VGISDRYSIALSDIGDNENEEYLNFAREKIKNP). Residues Lys-159 and Lys-161 each participate in a glycyl lysine isopeptide (Lys-Gly) (interchain with G-Cter in ubiquitin) cross-link. A helical membrane pass occupies residues 164–194 (EGGLYVAVTRLAGITGIVITLCLILIITSST). Residues 195–203 (KTIRRSYFE) are Cytoplasmic-facing. FAD contacts are provided by Arg-199 and Ser-200. Residues 204–222 (VFWYTHHLFVIFFIGLAIH) traverse the membrane as a helical segment. Heme b is bound by residues Trp-206, His-209, His-222, Arg-226, and Ile-227. The Extracellular portion of the chain corresponds to 223-267 (GAERIVRGQTAESLEEHNLDICADKIEEWGKIKECPVPKFAGNPP). Residue Lys-255 forms a Glycyl lysine isopeptide (Lys-Gly) (interchain with G-Cter in ubiquitin) linkage. Residues Met-268, Tyr-280, and Arg-287 each coordinate heme b. The helical transmembrane segment at 268–285 (MTWKWIVGPMFLYLCERL) threads the bilayer. At 286 to 570 (VRFWRSQQKV…VHFIFNKENF (285 aa)) the chain is on the cytoplasmic side. In terms of domain architecture, FAD-binding FR-type spans 287-397 (RFWRSQQKVV…DGPFGTASED (111 aa)). Residues Lys-294, Lys-299, Lys-306, Lys-328, and Lys-334 each participate in a glycyl lysine isopeptide (Lys-Gly) (interchain with G-Cter in ubiquitin) cross-link. The FAD site is built by Trp-337, His-338, Pro-339, Thr-341, His-354, Arg-356, Trp-361, and Thr-362. Lys-381 is covalently cross-linked (Glycyl lysine isopeptide (Lys-Gly) (interchain with G-Cter in ubiquitin)). Residues Ile-411, Arg-446, and Thr-481 each coordinate NADPH. Lys-506 participates in a covalent cross-link: Glycyl lysine isopeptide (Lys-Gly) (interchain with G-Cter in ubiquitin). Arg-513 is a binding site for NADPH. Lys-567 is covalently cross-linked (Glycyl lysine isopeptide (Lys-Gly) (interchain with G-Cter in ubiquitin)).

Component of the phagocyte NADPH oxidase core complex/cytochrome b558 complex, composed of CYBB (heavy chain (beta)) and CYBA (light chain (alpha)). Component of the phagocyte NADPH oxidase complex composed of an obligatory core heterodimer formed by the membrane proteins CYBA and CYBB and the cytosolic regulatory subunits NCF1/p47-phox, NCF2/p67-phox, NCF4/p40-phox and the small GTPase RAC1 or RAC2. Interacts with NCF1 (phosphorylated form). Interacts with NCF2; the interaction is enhanced in the presence of GBP7. Interacts with RAC2. Interacts with RAC1. Interacts with calprotectin (S100A8/9). Interacts with NRROS; the interaction is direct and impairs formation of a stable NADPH oxidase complex. Interacts with CYBC1; CYBC1 may act as a chaperone stabilizing Cytochrome b-245 heterodimer. The CYBA:CYBB complex interacts with GBP7. It depends on FAD as a cofactor. Glycosylated. In terms of processing, phosphorylated on Ser and Thr residues by PKC during neutrophils activation. Phosphorylation enhances the NADPH oxidase activity and stimulates its interaction with RAC2, NCF2/p67-phox, and NCF1/p47-phox. Post-translationally, undergoes 'Lys-48'-linked polyubiquitination, likely by RNF145, triggering endoplasmic reticulum-associated degradation.

It localises to the cell membrane. It catalyses the reaction NADPH + 2 O2 = 2 superoxide + NADP(+) + H(+). In terms of biological role, catalytic subunit of the phagocyte NADPH oxidase complex that mediates the transfer of electrons from cytosolic NADPH to O2 to produce the superoxide anion (O2(-)). In the activated complex, electrons are first transferred from NADPH to flavin adenine dinucleotide (FAD) and subsequently transferred via two heme molecules to molecular oxygen, producing superoxide through an outer-sphere reaction. Activation of the NADPH oxidase complex is initiated by the assembly of cytosolic subunits of the NADPH oxidase complex with the core NADPH oxidase complex to form a complex at the plasma membrane or phagosomal membrane. This activation process is initiated by phosphorylation dependent binding of the cytosolic NCF1/p47-phox subunit to the C-terminus of CYBA/p22-phox. NADPH oxidase complex assembly is impaired through interaction with NRROS. The chain is NADPH oxidase 2 from Mus musculus (Mouse).